A 153-amino-acid polypeptide reads, in one-letter code: Endoribonuclease YbeY (153 aa).

Positions 118, 122, and 128 each coordinate Zn(2+).

The protein belongs to the endoribonuclease YbeY family. Zn(2+) is required as a cofactor.

The protein localises to the cytoplasm. In terms of biological role, single strand-specific metallo-endoribonuclease involved in late-stage 70S ribosome quality control and in maturation of the 3' terminus of the 16S rRNA. The chain is Endoribonuclease YbeY from Clostridioides difficile (strain 630) (Peptoclostridium difficile).